Consider the following 455-residue polypeptide: GTPase Der (455 aa).

2 EngA-type G domains span residues 4 to 169 and 178 to 353; these read PVVA…PPKS and IQLA…EQHR. GTP contacts are provided by residues 10–17, 57–61, 120–123, 184–191, 231–235, and 296–299; these read GRPNVGKS, DTGGL, NKCE, DTAGI, and NKWD. The 86-residue stretch at 354–439 folds into the KH-like domain; that stretch reads RRVSTSVVNE…PLKLFWRGKQ (86 aa).

It belongs to the TRAFAC class TrmE-Era-EngA-EngB-Septin-like GTPase superfamily. EngA (Der) GTPase family. In terms of assembly, associates with the 50S ribosomal subunit.

Functionally, GTPase that plays an essential role in the late steps of ribosome biogenesis. The protein is GTPase Der of Synechococcus sp. (strain WH7803).